We begin with the raw amino-acid sequence, 739 residues long: Catalase-peroxidase 1 (739 aa).

A disordered region spans residues 1–33 (MPEDRPIEDSPPIGEAQTDAPAGGCPAGFGRIK). A cross-link (tryptophyl-tyrosyl-methioninium (Trp-Tyr) (with M-262)) is located at residues 113 to 236 (WHAAGTYRVS…LAAVQMGLIY (124 aa)). H114 (proton acceptor) is an active-site residue. A cross-link (tryptophyl-tyrosyl-methioninium (Tyr-Met) (with W-113)) is located at residues 236 to 262 (YVNPEGPNGNPDPQASAIDIRETFGRM). H277 contributes to the heme b binding site.

This sequence belongs to the peroxidase family. Peroxidase/catalase subfamily. As to quaternary structure, homodimer or homotetramer. Requires heme b as cofactor. Formation of the three residue Trp-Tyr-Met cross-link is important for the catalase, but not the peroxidase activity of the enzyme.

The catalysed reaction is H2O2 + AH2 = A + 2 H2O. The enzyme catalyses 2 H2O2 = O2 + 2 H2O. Functionally, bifunctional enzyme with both catalase and broad-spectrum peroxidase activity. May play a role in the intracellular survival of mycobacteria. The sequence is that of Catalase-peroxidase 1 from Mycolicibacterium smegmatis (strain ATCC 700084 / mc(2)155) (Mycobacterium smegmatis).